Consider the following 904-residue polypeptide: Translation initiation factor IF-2 (904 aa).

Disordered regions lie at residues 103 to 122, 137 to 252, and 267 to 315; these read YVKSENEGSGRAAPMTPDEE, NLEE…MVAG, and HLSA…FERP. Over residues 137–177 the composition is skewed to basic and acidic residues; sequence NLEEQQRLAESDRVRDEAIQRKREEEQAAKDRAEAERKAAE. Composition is skewed to low complexity over residues 178-230 and 280-293; these read EAAA…AAPA and RGKPTGRPGSSSSR. In terms of domain architecture, tr-type G spans 403–572; it reads SRPPVVTIMG…SLQAEVLELK (170 aa). The G1 stretch occupies residues 412-419; it reads GHVDHGKT. 412–419 is a binding site for GTP; it reads GHVDHGKT. The segment at 437-441 is G2; the sequence is GITQH. The tract at residues 458–461 is G3; it reads DTPG. Residues 458–462 and 512–515 contribute to the GTP site; these read DTPGH and NKID. The segment at 512–515 is G4; sequence NKID. The interval 548–550 is G5; it reads SAK.

The protein belongs to the TRAFAC class translation factor GTPase superfamily. Classic translation factor GTPase family. IF-2 subfamily.

It is found in the cytoplasm. Its function is as follows. One of the essential components for the initiation of protein synthesis. Protects formylmethionyl-tRNA from spontaneous hydrolysis and promotes its binding to the 30S ribosomal subunits. Also involved in the hydrolysis of GTP during the formation of the 70S ribosomal complex. This Xanthomonas euvesicatoria pv. vesicatoria (strain 85-10) (Xanthomonas campestris pv. vesicatoria) protein is Translation initiation factor IF-2.